We begin with the raw amino-acid sequence, 73 residues long: Large ribosomal subunit protein bL31 (73 aa).

Belongs to the bacterial ribosomal protein bL31 family. Type A subfamily. In terms of assembly, part of the 50S ribosomal subunit.

In terms of biological role, binds the 23S rRNA. The sequence is that of Large ribosomal subunit protein bL31 from Mesorhizobium japonicum (strain LMG 29417 / CECT 9101 / MAFF 303099) (Mesorhizobium loti (strain MAFF 303099)).